The chain runs to 62 residues: Large ribosomal subunit protein eL37 (62 aa).

Zn(2+)-binding residues include cysteine 20, cysteine 23, cysteine 35, and cysteine 38. Residues 20 to 38 (CRRCGRKAFNVKKGYCAAC) form a C4-type zinc finger.

The protein belongs to the eukaryotic ribosomal protein eL37 family. The cofactor is Zn(2+).

Functionally, binds to the 23S rRNA. The polypeptide is Large ribosomal subunit protein eL37 (rpl37e) (Pyrococcus abyssi (strain GE5 / Orsay)).